The sequence spans 259 residues: Global transcriptional regulator CodY (259 aa).

Positions 1-155 (MELLAKTRKL…SATVVGMEIL (155 aa)) are GAF domain. Residues 203–222 (ASKIADRVGITRSVIVNALR) constitute a DNA-binding region (H-T-H motif). Ser-215 is subject to Phosphoserine.

Belongs to the CodY family.

Its subcellular location is the cytoplasm. DNA-binding global transcriptional regulator which is involved in the adaptive response to starvation and acts by directly or indirectly controlling the expression of numerous genes in response to nutrient availability. During rapid exponential growth, CodY is highly active and represses genes whose products allow adaptation to nutrient depletion. The sequence is that of Global transcriptional regulator CodY from Bacillus cytotoxicus (strain DSM 22905 / CIP 110041 / 391-98 / NVH 391-98).